The following is a 3916-amino-acid chain: Fusarin C synthetase (3916 aa).

One can recognise a Ketosynthase family 3 (KS3) domain in the interval 9–440 (KEPIAIIGTS…GTNVHAIIEQ (432 aa)). Residues cysteine 182, histidine 319, and histidine 360 each act as for beta-ketoacyl synthase activity in the active site. A malonyl-CoA:ACP transacylase (MAT) domain region spans residues 548–866 (VFTGQGAQWP…QGTVARNIHD (319 aa)). The segment at 935–1068 (HPLLGARSVE…GQLRVEFGCS (134 aa)) is N-terminal hotdog fold. Positions 935–1228 (HPLLGARSVE…GLTCTSLLRP (294 aa)) are dehydratase (DH) domain. The 297-residue stretch at 935 to 1231 (HPLLGARSVE…CTSLLRPGPS (297 aa)) folds into the PKS/mFAS DH domain. Histidine 967 serves as the catalytic Proton acceptor; for dehydratase activity. A C-terminal hotdog fold region spans residues 1084-1231 (LTSVNMERFY…CTSLLRPGPS (148 aa)). The Proton donor; for dehydratase activity role is filled by aspartate 1141. Residues 1347–1575 (IQAVGENLPS…VNDFVDAEKY (229 aa)) are C-methyltransferase (CMeT) domain. Residues 2092–2266 (TYLLIGCTGG…AASVMHIGMV (175 aa)) form a ketoreductase (KR) domain 1 region. A Carrier 1 domain is found at 2372–2449 (EILAVVEEEF…ELCSTVVSHL (78 aa)). Serine 2409 is modified (O-(pantetheine 4'-phosphoryl)serine). The disordered stretch occupies residues 2487-2510 (NEPFTIRNSPNSTQVTSEAGVDED). Residues 2492–2503 (IRNSPNSTQVTS) are compositionally biased toward polar residues. A condensation region spans residues 2522–2806 (PLSFAQERLW…VNLLPLRLKI (285 aa)). Residues 2975 to 3385 (EFVVKQPDDT…RIAGDSQIKL (411 aa)) form an adenylation region. The 78-residue stretch at 3493–3570 (KPLTETQERL…EMAAKIDGST (78 aa)) folds into the Carrier 2 domain. Serine 3530 carries the O-(pantetheine 4'-phosphoryl)serine modification. The interval 3612–3833 (LTGATGFLGV…DFVPVDVVAA (222 aa)) is thiolester reductase (R) domain.

It in the C-terminal section; belongs to the NRP synthetase family.

The protein operates within mycotoxin biosynthesis. Functionally, fusarin C synthetase; part of the gene cluster that mediates the biosynthesis of the mycotoxin fusarin C. Within the cluster, FUS1, FUS2, FUS8 and FUS9 are sufficient for fusarin production. The roles of the other FUS members are yet undetermined. The fusarin C synthetase FUS1 is responsible for the condensation of one acetyl-coenzyme A (CoA) unit with six malonyl-CoA units and the amide linkage of the arising heptaketide and homoserine, subsequently releasing the first intermediate, prefusarin, as an alcohol with an open ring structure. The cytochrome P450 monooxygenase FUS8 participates in multiple oxidation processes at carbon C-20 and is able to use the FUS1 product as substrate, resulting in formation of 20-hydroxy-prefusarin. This reaction seems to be essential before the 2-pyrrolidone ring closure can be catalyzed by FUS2, generating 20-hydroxy-fusarin. FUS8 is able to further oxidizes carbon C-20 after ring closure, resulting in the formation of carboxy-fusarin C. As the last step, FUS9 methylates the hydroxyl group at C-21 to generate fusarin C. Fusarin C can then rearrange to epi-fusarin C, the (z)-isomers, and fusarin A and fusarin D. The protein is Fusarin C synthetase of Gibberella fujikuroi (strain CBS 195.34 / IMI 58289 / NRRL A-6831) (Bakanae and foot rot disease fungus).